Reading from the N-terminus, the 69-residue chain is Pancreatic propolypeptide YG (69 aa).

It belongs to the NPY family.

The protein localises to the secreted. This Lophius americanus (American angler) protein is Pancreatic propolypeptide YG.